The chain runs to 216 residues: MNNMNIIIADDHPIVLFGIRKSLEQIEWVNVVGEFEDSTALINNLPKLDAHVLITDLSMPGDKYGDGITLIKYIKRHFPSLSIIVLTMNNNPAILSAVLDLDIEGIVLKQGAPTDLPKALAALQKGKKFTPESVSRLLEKISAGGYGDKRLSPKESEVLRLFAEGFLVTEIAKKLNRSIKTISSQKKSAMMKLGVENDIALLNYLSSVTLSPTDKE.

A Response regulatory domain is found at 5-124 (NIIIADDHPI…DLPKALAALQ (120 aa)). Aspartate 56 carries the 4-aspartylphosphate modification. Residues 144 to 209 (GGYGDKRLSP…ALLNYLSSVT (66 aa)) enclose the HTH luxR-type domain. A DNA-binding region (H-T-H motif) is located at residues 168–187 (VTEIAKKLNRSIKTISSQKK).

The protein belongs to the RcsB family. As to quaternary structure, interacts with RcsD and RcsA. In terms of processing, phosphorylated and activated by RcsD.

Component of the Rcs signaling system, which controls transcription of numerous genes. RcsB is the response regulator that binds to regulatory DNA regions. Can function both in an RcsA-dependent or RcsA-independent manner. This chain is Transcriptional regulatory protein RcsB, found in Salmonella typhi.